Reading from the N-terminus, the 882-residue chain is Pyruvate dehydrogenase E1 component (882 aa).

Homodimer. Part of the PDH complex, consisting of multiple copies of pyruvate dehydrogenase (E1), dihydrolipoamide acetyltransferase (E2) and lipoamide dehydrogenase (E3). It depends on thiamine diphosphate as a cofactor.

The enzyme catalyses N(6)-[(R)-lipoyl]-L-lysyl-[protein] + pyruvate + H(+) = N(6)-[(R)-S(8)-acetyldihydrolipoyl]-L-lysyl-[protein] + CO2. Component of the pyruvate dehydrogenase (PDH) complex, that catalyzes the overall conversion of pyruvate to acetyl-CoA and CO(2). This Pseudomonas aeruginosa (strain ATCC 15692 / DSM 22644 / CIP 104116 / JCM 14847 / LMG 12228 / 1C / PRS 101 / PAO1) protein is Pyruvate dehydrogenase E1 component (aceE).